A 1502-amino-acid chain; its full sequence is MDLSVIKAASLDLESLPSQPTVSSFQQLRETFIQSKSEDWYLKNGLFFRYYSFLKSSLENATLDGPSQVACLDTISVWLRRIFNACKQDPEISKYVWDTMELKFWTNLFSLPANKISIPGLTGVQVAVKDVFSKSLQLYLLVCPSEDIKNDFLLDSLKHALHWDRHAKVVCTAIQLLVKVTGAEAVFAFQPDFFEQSLKLLKDYSYAQAISSTILTVLTLRFKSLSEETEDREEVETKWMNIWCPIILYEFYGNDRQVQAGMSSFLIPSLLGVSPGITVKFLSRLQNYPNVSKDARDAACLYALKIAKDSKIIKNLDLVKEHAFVKTLFKHPDIKIQLACFRLIALCPNVSSPLSFEDFDCLESNIEFSFNVLDPDSRQILLKSMQDFFIRLRASCHSIARTMRSRHSDKVALSGLLDRAMQFLTSFISVCKKHLYPTCNYQQVLVSLSFLDTLISFGLDDNVESSSIREAQHDFPFSMVIIDRDLSRLMIDRLKDPYDDIRNLCLKILLSYKSLPGFISDSDAYFLFNHGLELLNAVRSHECDGGAKTIYLCNHFMEKSVPGSVLANTKVILNRLKSNIEHAKTSLLEAAVNCPLQGYLIQLTYIFQSLSPTIVKNDNESWKNIVMELIKASETIWGLIKDVLCDDSPEGNLPDGEGEGGIVSNLEDTPAQLILSYSWRSLKETSSLLTVLLTKCLSLFDEEFTPFTLNYYGELMMTWLWEIRHRGAFTSVYPCFIEYCSFLFECNKHEISELPDPWLHKNLSVIQEKSSFITRRSGGIPLSITAILVAGKDKREQLIEQTVISLISIAKQPVEQKNIAGQFDLPQVHAMNTLKTIFTEHRLSSVSVEYLEPAIALSIEGFSHELWPIRNCSVMLFTALINRAFGSKKPKDAVNLGNNKGLSTKMFFSKFPTLHDYLLRELEVSVASLSSNDQPSTGLYPILNMFSRLQYAQPYGNENEWTGLSQFEPLIFKCTASRICKVREIASLSLTCLLDCSKMTTFIVSQLKGVAGLQQNEIHGKLLTIRAVLSCFFSKLTLQQVQEFYEVVPLAFINCFLEFTSSKTSFYAKKLFLEVLNSYFMSNTDSNAKRLQQLRRMTMDYCKRMLLDRKANVTNVFNTIGLPIHQQMAATIFLENLKEFSVYCDAHSIGFLVSKLLHYEFYEVQLTTLRSIVDSPRKKIIVNNPEILQALIKLTPRNQWSQVRALALSLLSDSLNSTSYRLLGISCSDMVSNILSNECLPIKESFIVLLGSCIKQLKTENFLEYKVTFAKWVEILLSYSNEYQPFSSRKAALDSIIHFDLFNAESTAEAFSFEFYILYLLLGDFLNDDDEEIRSLAANHAYQVLGTSAQCVTEIWNLWKLRTKATFGGQHDFQHCINKRLILEDGCELASVQLDNALSRNCSLFERERQNLYYSDNQKLEDLLFYASYPNEKLKDWATDGINAILSRFEDVSRDGPLGKTSDPNVWFTIYKIIRIAEHVHLPLDRVHSLMNRIDGHPSFCQ.

Belongs to the THADA family.

The protein localises to the cytoplasm. The protein resides in the nucleus. Functionally, together with methyltransferase trm7, methylates the 2'-O-ribose of nucleotides at position 32 of the anticodon loop of substrate tRNAs. In Schizosaccharomyces pombe (strain 972 / ATCC 24843) (Fission yeast), this protein is tRNA (32-2'-O)-methyltransferase regulator trm732.